A 427-amino-acid polypeptide reads, in one-letter code: Adenylosuccinate synthetase (427 aa).

Residues 12–18 and 40–42 contribute to the GTP site; these read GDEGKGK and GHT. D13 serves as the catalytic Proton acceptor. Mg(2+)-binding residues include D13 and G40. Residues 13 to 16, 38 to 41, T128, R142, Q223, T238, and R302 each bind IMP; these read DEGK and NAGH. Catalysis depends on H41, which acts as the Proton donor. Residue 298-304 coordinates substrate; that stretch reads TTTGRPR. GTP contacts are provided by residues R304, 330–332, and 412–414; these read SID and SVG.

It belongs to the adenylosuccinate synthetase family. As to quaternary structure, homodimer. It depends on Mg(2+) as a cofactor.

It localises to the cytoplasm. It carries out the reaction IMP + L-aspartate + GTP = N(6)-(1,2-dicarboxyethyl)-AMP + GDP + phosphate + 2 H(+). It participates in purine metabolism; AMP biosynthesis via de novo pathway; AMP from IMP: step 1/2. In terms of biological role, plays an important role in the de novo pathway of purine nucleotide biosynthesis. Catalyzes the first committed step in the biosynthesis of AMP from IMP. The chain is Adenylosuccinate synthetase from Staphylococcus aureus (strain MW2).